Consider the following 61-residue polypeptide: Small ribosomal subunit protein uS14 (61 aa).

The Zn(2+) site is built by Cys24, Cys27, Cys40, and Cys43.

Belongs to the universal ribosomal protein uS14 family. Zinc-binding uS14 subfamily. In terms of assembly, part of the 30S ribosomal subunit. Contacts proteins S3 and S10. It depends on Zn(2+) as a cofactor.

In terms of biological role, binds 16S rRNA, required for the assembly of 30S particles and may also be responsible for determining the conformation of the 16S rRNA at the A site. This is Small ribosomal subunit protein uS14 from Mycobacterium avium (strain 104).